The sequence spans 272 residues: Glutamate 5-kinase (272 aa).

Lys15 serves as a coordination point for ATP. Substrate contacts are provided by Ser55, Asp142, and Asn158. ATP-binding positions include 178 to 179 and 220 to 226; these read SD and TGGMLSK.

Belongs to the glutamate 5-kinase family.

The protein localises to the cytoplasm. It catalyses the reaction L-glutamate + ATP = L-glutamyl 5-phosphate + ADP. It functions in the pathway amino-acid biosynthesis; L-proline biosynthesis; L-glutamate 5-semialdehyde from L-glutamate: step 1/2. Its function is as follows. Catalyzes the transfer of a phosphate group to glutamate to form L-glutamate 5-phosphate. In Streptococcus equi subsp. zooepidemicus (strain H70), this protein is Glutamate 5-kinase.